Here is a 154-residue protein sequence, read N- to C-terminus: uncharacterized protein (154 aa).

A helical transmembrane segment spans residues 23–43 (SAVALVTFAGAALSGVIPAIA).

The protein resides in the membrane. This is an uncharacterized protein from Mycobacterium tuberculosis (strain CDC 1551 / Oshkosh).